A 196-amino-acid chain; its full sequence is Large ribosomal subunit protein bL25 (196 aa).

It belongs to the bacterial ribosomal protein bL25 family. CTC subfamily. In terms of assembly, part of the 50S ribosomal subunit; part of the 5S rRNA/L5/L18/L25 subcomplex. Contacts the 5S rRNA. Binds to the 5S rRNA independently of L5 and L18.

Functionally, this is one of the proteins that binds to the 5S RNA in the ribosome where it forms part of the central protuberance. The protein is Large ribosomal subunit protein bL25 of Bacteroides thetaiotaomicron (strain ATCC 29148 / DSM 2079 / JCM 5827 / CCUG 10774 / NCTC 10582 / VPI-5482 / E50).